Here is a 247-residue protein sequence, read N- to C-terminus: GTP cyclohydrolase 1 type 2 homolog (247 aa).

5 residues coordinate a divalent metal cation: His-63, His-64, Asp-101, His-215, and Glu-219.

It belongs to the GTP cyclohydrolase I type 2/NIF3 family. As to quaternary structure, toroid-shaped homohexamer. In the hexamer, 3 dimers assemble to form a ring-like structure surrounding a central hole.

Functionally, provides significant protection from radiation damage and may be involved in the degradation of radiation-damaged nucleotides. This is GTP cyclohydrolase 1 type 2 homolog (ybgI) from Escherichia coli O157:H7.